Reading from the N-terminus, the 225-residue chain is Insulin-induced gene 2 protein (225 aa).

The Cytoplasmic portion of the chain corresponds to 1–28 (MAEGETESPGPKKCGPYISSVTSQSVNL). A helical transmembrane segment spans residues 29-51 (MIRGVVLFFIGVFLALVLNLLQI). Residues 52–70 (QRNVTLFPPDVIASIFSSA) lie on the Lumenal side of the membrane. A helical membrane pass occupies residues 71-88 (WWVPPCCGTASAVIGLLY). At 89 to 103 (PCIDRHLGEPHKFKR) the chain is on the cytoplasmic side. Residues 104–126 (EWSSVMRCVAVFVGINHASAKVD) traverse the membrane as a helical segment. The Lumenal segment spans residues 127–129 (FDN). Residues 130 to 148 (NIQLSLTLAALSIGLWWTF) traverse the membrane as a helical segment. Residues 149 to 153 (DRSRS) are Cytoplasmic-facing. Phosphoserine; by PCK1 is present on Ser151. A helical membrane pass occupies residues 154–175 (GFGLGVGIAFLATVVTQLLVYN). Residues 176-189 (GVYQYTSPDFLYVR) lie on the Lumenal side of the membrane. The chain crosses the membrane as a helical span at residues 190 to 207 (SWLPCIFFAGGITMGNIG). Residues 208 to 225 (RQLAMYECKVIAEKSHQE) lie on the Cytoplasmic side of the membrane. Cys215 carries the post-translational modification Cysteine sulfenic acid (-SOH); alternate. Cys215 participates in a covalent cross-link: Glycyl cysteine thioester (Cys-Gly) (interchain with G-Cter in ubiquitin); alternate. Residues 219–225 (AEKSHQE) carry the KxHxx motif.

This sequence belongs to the INSIG family. As to quaternary structure, interacts with SCAP; interaction is direct and only takes place in the presence of sterols; it prevents interaction between SCAP and the coat protein complex II (COPII). Associates with the SCAP-SREBP complex (composed of SCAP and SREBF1/SREBP1 or SREBF2/SREBP2); association is mediated via its interaction with SCAP and only takes place in the presence of sterols. Interacts with RNF139. Interacts with RNF145. Post-translationally, phosphorylation at Ser-151 by PCK1 reduces binding to oxysterol, disrupting the interaction between INSIG2 and SCAP, thereby promoting nuclear translocation of SREBP proteins (SREBF1/SREBP1 or SREBF2/SREBP2) and subsequent transcription of downstream lipogenesis-related genes. Polyubiquitinated by AMFR/gp78 at Cys-215 in some tissues such as adipose tissues, undifferentiated myoblasts and liver, leading to its degradation. In differentiated myotubes, Cys-215 oxidation prevents ubiquitination at the same site, resulting in protein stabilization. In terms of processing, oxidized at Cys-215 in differentiated myotubes, preventing ubiquitination at the same site, and resulting in protein stabilization.

It localises to the endoplasmic reticulum membrane. Its function is as follows. Oxysterol-binding protein that mediates feedback control of cholesterol synthesis by controlling both endoplasmic reticulum to Golgi transport of SCAP and degradation of HMGCR. Acts as a negative regulator of cholesterol biosynthesis by mediating the retention of the SCAP-SREBP complex in the endoplasmic reticulum, thereby blocking the processing of sterol regulatory element-binding proteins (SREBPs) SREBF1/SREBP1 and SREBF2/SREBP2. Binds oxysterol, including 22-hydroxycholesterol, 24-hydroxycholesterol, 25-hydroxycholesterol and 27-hydroxycholesterol, regulating interaction with SCAP and retention of the SCAP-SREBP complex in the endoplasmic reticulum. In presence of oxysterol, interacts with SCAP, retaining the SCAP-SREBP complex in the endoplasmic reticulum, thereby preventing SCAP from escorting SREBF1/SREBP1 and SREBF2/SREBP2 to the Golgi. Sterol deprivation or phosphorylation by PCK1 reduce oxysterol-binding, disrupting the interaction between INSIG2 and SCAP, thereby promoting Golgi transport of the SCAP-SREBP complex, followed by processing and nuclear translocation of SREBF1/SREBP1 and SREBF2/SREBP2. Also regulates cholesterol synthesis by regulating degradation of HMGCR: initiates the sterol-mediated ubiquitin-mediated endoplasmic reticulum-associated degradation (ERAD) of HMGCR via recruitment of the reductase to the ubiquitin ligase RNF139. This chain is Insulin-induced gene 2 protein, found in Homo sapiens (Human).